A 580-amino-acid polypeptide reads, in one-letter code: PTS system fructose-specific EIIB'BC component (580 aa).

PTS EIIB type-2 domains are found at residues 1 to 99 and 120 to 215; these read MSSS…QLAA and IVAI…KALA. The active-site Phosphocysteine intermediate; for EIIB activity is the Cys126. Cys126 carries the post-translational modification Phosphocysteine; by EIIA. Residues 243 to 580 form the PTS EIIC type-2 domain; sequence AYKHLMTGVS…LKKPVADVIA (338 aa). Helical transmembrane passes span 254 to 274, 289 to 309, 332 to 352, 369 to 389, 410 to 430, 451 to 471, 483 to 503, 509 to 529, and 549 to 571; these read MLPFVTAGGLLIALAFALGGI, LFQIGAKAGFTLMVPALAGYI, LNAGFLGGIIAGFIAGYGVAA, VLILPVLGTLLVGLAMMYVFG, SALLLGLLLGGMMAFDMGGPV, AAAMVAGMTPPLGIALATWVF, ATAAGVLGLAFVTEGAIPYAA, TIPALVIGSAVAGAISMTAGA, and HLLNYVLALVVGVVVTAVALRLL.

Its subcellular location is the cell inner membrane. The enzyme catalyses D-fructose(out) + N(pros)-phospho-L-histidyl-[protein] = D-fructose 1-phosphate(in) + L-histidyl-[protein]. Functionally, the phosphoenolpyruvate-dependent sugar phosphotransferase system (sugar PTS), a major carbohydrate active transport system, catalyzes the phosphorylation of incoming sugar substrates concomitantly with their translocation across the cell membrane. The enzyme II FruAB PTS system is involved in fructose transport. This is PTS system fructose-specific EIIB'BC component from Xanthomonas campestris pv. campestris (strain ATCC 33913 / DSM 3586 / NCPPB 528 / LMG 568 / P 25).